Consider the following 153-residue polypeptide: Superoxide dismutase [Cu-Zn] (153 aa).

Positions 45, 47, and 62 each coordinate Cu cation. Cys-56 and Cys-145 form a disulfide bridge. Residues His-62, His-70, His-79, and Asp-82 each contribute to the Zn(2+) site. His-119 lines the Cu cation pocket.

It belongs to the Cu-Zn superoxide dismutase family. In terms of assembly, homodimer. Cu cation is required as a cofactor. It depends on Zn(2+) as a cofactor.

The protein resides in the cytoplasm. The enzyme catalyses 2 superoxide + 2 H(+) = H2O2 + O2. In terms of biological role, destroys radicals which are normally produced within the cells and which are toxic to biological systems. The polypeptide is Superoxide dismutase [Cu-Zn] (Drosophila yakuba (Fruit fly)).